The following is a 169-amino-acid chain: uncharacterized protein (169 aa).

Residues 97–117 (IVIFCILVIVAFVIWLVVWLF) form a helical membrane-spanning segment. A disordered region spans residues 137-169 (NYSGLPTPQPTPTHYPAEQYSYDPARDRDNYRY). A compositionally biased stretch (basic and acidic residues) spans 160–169 (PARDRDNYRY).

The protein resides in the membrane. This is an uncharacterized protein from Caenorhabditis elegans.